Here is a 284-residue protein sequence, read N- to C-terminus: 2-dehydro-3-deoxyphosphooctonate aldolase (284 aa).

The protein belongs to the KdsA family.

It is found in the cytoplasm. It carries out the reaction D-arabinose 5-phosphate + phosphoenolpyruvate + H2O = 3-deoxy-alpha-D-manno-2-octulosonate-8-phosphate + phosphate. Its pathway is carbohydrate biosynthesis; 3-deoxy-D-manno-octulosonate biosynthesis; 3-deoxy-D-manno-octulosonate from D-ribulose 5-phosphate: step 2/3. It functions in the pathway bacterial outer membrane biogenesis; lipopolysaccharide biosynthesis. This Escherichia fergusonii (strain ATCC 35469 / DSM 13698 / CCUG 18766 / IAM 14443 / JCM 21226 / LMG 7866 / NBRC 102419 / NCTC 12128 / CDC 0568-73) protein is 2-dehydro-3-deoxyphosphooctonate aldolase.